We begin with the raw amino-acid sequence, 217 residues long: Ribose-5-phosphate isomerase A (217 aa).

Substrate contacts are provided by residues 28 to 31, 81 to 84, and 94 to 97; these read TGST, DGAD, and KGGG. The active-site Proton acceptor is Glu103. Lys121 is a binding site for substrate.

The protein belongs to the ribose 5-phosphate isomerase family. As to quaternary structure, homodimer.

The enzyme catalyses aldehydo-D-ribose 5-phosphate = D-ribulose 5-phosphate. It functions in the pathway carbohydrate degradation; pentose phosphate pathway; D-ribose 5-phosphate from D-ribulose 5-phosphate (non-oxidative stage): step 1/1. Its function is as follows. Catalyzes the reversible conversion of ribose-5-phosphate to ribulose 5-phosphate. This chain is Ribose-5-phosphate isomerase A, found in Aeromonas salmonicida (strain A449).